The chain runs to 371 residues: Queuine tRNA-ribosyltransferase (371 aa).

Catalysis depends on D89, which acts as the Proton acceptor. Residues 89–93, D143, Q185, and G212 each bind substrate; that span reads DSGGF. The tract at residues 243 to 249 is RNA binding; the sequence is GVGKPED. D262 functions as the Nucleophile in the catalytic mechanism. The segment at 267–271 is RNA binding; important for wobble base 34 recognition; the sequence is TRNAR. Residues C300, C302, C305, and H331 each contribute to the Zn(2+) site.

The protein belongs to the queuine tRNA-ribosyltransferase family. In terms of assembly, homodimer. Within each dimer, one monomer is responsible for RNA recognition and catalysis, while the other monomer binds to the replacement base PreQ1. Zn(2+) serves as cofactor.

The enzyme catalyses 7-aminomethyl-7-carbaguanine + guanosine(34) in tRNA = 7-aminomethyl-7-carbaguanosine(34) in tRNA + guanine. It functions in the pathway tRNA modification; tRNA-queuosine biosynthesis. Functionally, catalyzes the base-exchange of a guanine (G) residue with the queuine precursor 7-aminomethyl-7-deazaguanine (PreQ1) at position 34 (anticodon wobble position) in tRNAs with GU(N) anticodons (tRNA-Asp, -Asn, -His and -Tyr). Catalysis occurs through a double-displacement mechanism. The nucleophile active site attacks the C1' of nucleotide 34 to detach the guanine base from the RNA, forming a covalent enzyme-RNA intermediate. The proton acceptor active site deprotonates the incoming PreQ1, allowing a nucleophilic attack on the C1' of the ribose to form the product. After dissociation, two additional enzymatic reactions on the tRNA convert PreQ1 to queuine (Q), resulting in the hypermodified nucleoside queuosine (7-(((4,5-cis-dihydroxy-2-cyclopenten-1-yl)amino)methyl)-7-deazaguanosine). The sequence is that of Queuine tRNA-ribosyltransferase from Thioalkalivibrio sulfidiphilus (strain HL-EbGR7).